Consider the following 250-residue polypeptide: 4-hydroxy-tetrahydrodipicolinate reductase (250 aa).

Residues 9 to 14 (GATGKM), 79 to 81 (GTT), and 103 to 106 (SANM) each bind NAD(+). His-135 serves as the catalytic Proton donor/acceptor. A (S)-2,3,4,5-tetrahydrodipicolinate-binding site is contributed by His-136. The active-site Proton donor is Lys-139. 145–146 (GT) is a binding site for (S)-2,3,4,5-tetrahydrodipicolinate.

Belongs to the DapB family.

It localises to the cytoplasm. It carries out the reaction (S)-2,3,4,5-tetrahydrodipicolinate + NAD(+) + H2O = (2S,4S)-4-hydroxy-2,3,4,5-tetrahydrodipicolinate + NADH + H(+). The catalysed reaction is (S)-2,3,4,5-tetrahydrodipicolinate + NADP(+) + H2O = (2S,4S)-4-hydroxy-2,3,4,5-tetrahydrodipicolinate + NADPH + H(+). The protein operates within amino-acid biosynthesis; L-lysine biosynthesis via DAP pathway; (S)-tetrahydrodipicolinate from L-aspartate: step 4/4. In terms of biological role, catalyzes the conversion of 4-hydroxy-tetrahydrodipicolinate (HTPA) to tetrahydrodipicolinate. In Rickettsia bellii (strain OSU 85-389), this protein is 4-hydroxy-tetrahydrodipicolinate reductase.